The chain runs to 668 residues: MELEVPDEAESAEAGAVPSEAAWAAESGAAAGLAQKKAAPTEVLSMTAQPGPGHGKKLGHRGVDASGETTYKKTTSSTLKGAIQLGIGYTVGHLSSKPERDVLMQDFYVVESIFFPSEGSNLTPAHHFQDFRFKTYAPVAFRYFRELFGIRPDDYLYSLCNEPLIELSNPGASGSLFYVTSDDEFIIKTVMHKEAEFLQKLLPGYYMNLNQNPRTLLPKFYGLYCVQSGGKNIRVVVMNNILPRVVKMHLKFDLKGSTYKRRASKKEKEKSFPTYKDLDFMQDMPEGLLLDADTFSALVKTLQRDCLVLESFKIMDYSLLLGVHNIDQHERERQAQGAQSTSDEKRPVGQKALYSTAMESIQGGAARGEAIESDDTMGGIPAVNGRGERLLLHIGIIDILQSYRFIKKLEHTWKALVHDGDTVSVHRPSFYAERFFKFMSNTVFRKNSSLKSSPSKKGRGGALLAVKPLGPTAAFSASQIPSEREEAQYDLRGARSYPTLEDEGRPDLLPCTPPSFEEATTASIATTLSSTSLSIPERSPSETSEQPRYRRRTQSSGQDGRPQEEPPAEEDLQQITVQVEPACSVEIVVPKEEDAGVEASPAGASAAVEVETASQASDEEGAPASQASDEEDAPATDIYFPTDERSWVYSPLHYSAQAPPASDGESDT.

A disordered region spans residues 45–67 (SMTAQPGPGHGKKLGHRGVDASG). The PIPK domain maps to 75–443 (TSSTLKGAIQ…RFFKFMSNTV (369 aa)). N6-acetyllysine is present on residues Lys265 and Lys268. Arg459 carries the post-translational modification Asymmetric dimethylarginine; alternate. Arg459 carries the omega-N-methylarginine; alternate modification. The segment covering 526–535 (TTLSSTSLSI) has biased composition (low complexity). Disordered regions lie at residues 526 to 578 (TTLS…ITVQ) and 593 to 642 (EDAG…YFPT). Phosphoserine is present on Ser555. Tyr639 is modified (phosphotyrosine; by EGFR). The segment at 641–668 (PTDERSWVYSPLHYSAQAPPASDGESDT) is mediates interaction with TLN2. Phosphotyrosine; by CSK is present on Tyr649. Phosphoserine; by CDK5, MAPK1 and CDK1 is present on Ser650. 2 positions are modified to phosphoserine: Ser662 and Ser666. A Phosphothreonine modification is found at Thr668.

As to quaternary structure, interacts with TLN1. Interacts with TLN2; interaction stimulates 1-phosphatidylinositol-4-phosphate 5-kinase activity. May compete with beta-integrins for the same binding site on TLN1 and TLN2. Interacts with ARF6; interaction stimulates 1-phosphatidylinositol-4-phosphate 5-kinase activity. Interacts with AP2B1. Interacts with AP2M1; phosphorylation of PIP5K1C by CSK disrupts the interaction; clathrin competes with PIP5K1C. Interacts with CDH1. Interacts with CSK. Interacts with PLCG1; interaction is abolished upon EGF stimulation. Interacts with LAPTM4B; promotes SNX5 association with LAPTM4B; kinase activity of PIP5K1C is required; interaction is regulated by phosphatidylinositol 4,5-bisphosphate generated by PIP5K1C. In terms of processing, phosphorylation on Ser-650 negatively regulates binding to TLN2 and is strongly stimulated in mitosis. Phosphorylation on Tyr-649 is necessary for targeting to focal adhesions. Phosphorylation on Ser-650 and Tyr-649 are mutually exclusive. Phosphorylated by SYK and CSK. Tyrosine phosphorylation is enhanced by PTK2 signaling. Phosphorylated at Tyr-639 upon EGF stimulation. Some studies suggest that phosphorylation on Tyr-649 enhances binding to tailins (TLN1 and TLN2). According to PubMed:15738269 phosphorylation at Tyr-649 does not directly enhance binding to tailins (TLN1 and TLN2) but may act indirectly by inhibiting phosphorylation at Ser-650. Post-translationally, acetylation at Lys-265 and Lys-268 seems to decrease lipid 1-phosphatidylinositol-4-phosphate 5-kinase activity. Deacetylation of these sites by SIRT1 positively regulates the exocytosis of TSH-containing granules from pituitary cells. Isoform 1 is strongly expressed in brain and also detected in heart and lung. In terms of tissue distribution, isoform 2 is strongly expressed in pancreas and liver and in lesser quantities in brain, heart, lung and kidney. As to expression, isoform 3 is detected in large amounts in heart and large intestine, is also present in lung, pancreas and thyroid, and to a lesser extent in brain, stomach and kidney.

Its subcellular location is the cell membrane. It localises to the endomembrane system. The protein localises to the cytoplasm. The protein resides in the cell junction. It is found in the focal adhesion. Its subcellular location is the adherens junction. It localises to the cell projection. The protein localises to the ruffle membrane. The protein resides in the phagocytic cup. It is found in the uropodium. Its subcellular location is the nucleus. It catalyses the reaction a 1,2-diacyl-sn-glycero-3-phospho-(1D-myo-inositol 4-phosphate) + ATP = a 1,2-diacyl-sn-glycero-3-phospho-(1D-myo-inositol-4,5-bisphosphate) + ADP + H(+). It carries out the reaction 1-octadecanoyl-2-(5Z,8Z,11Z,14Z)-eicosatetraenoyl-sn-glycero-3-phospho-1D-myo-inositol 4-phosphate + ATP = 1-octadecanoyl-2-(5Z,8Z,11Z,14Z)-eicosatetraenoyl-sn-glycero-3-phospho-1D-myo-inositol 4,5-bisphosphate + ADP + H(+). The enzyme catalyses 1-octadecanoyl-2-(9Z)-octadecenoyl-sn-glycero-3-phospho-1D-myo-inositol 4-phosphate + ATP = 1-octadecanoyl-2-(9Z)-octadecenoyl-sn-glycero-3-phospho-1D-myo-inositol 4,5-bisphosphate + ADP + H(+). The catalysed reaction is 1-octadecanoyl-2-(9Z)-octadecenoyl-sn-glycero-3-phospho-1D-myo-inositol + ATP = 1-octadecanoyl-2-(9Z)-octadecenoyl-sn-glycero-3-phospho-1D-myo-inositol 5-phosphate + ADP + H(+). It catalyses the reaction 1-octadecanoyl-2-(9Z,12Z)-octadecadienoyl-sn-glycero-3-phospho-1D-myo-inositol + ATP = 1-octadecanoyl-2-(9Z,12Z)-octadecadienoyl-sn-glycero-3-phospho-1D-myo-inositol 5-phosphate + ADP + H(+). It carries out the reaction 1-octadecanoyl-2-(5Z,8Z,11Z,14Z-eicosatetraenoyl)-sn-glycero-3-phospho-(1D-myo-inositol) + ATP = 1-octadecanoyl-2-(5Z,8Z,11Z,14Z)-eicosatetraenoyl-sn-glycero-3-phospho-1D-myo-inositol 5-phosphate + ADP + H(+). The enzyme catalyses 1,2-di-(9Z,12Z)-octadecadienoyl-sn-glycero-3-phospho-1D-myo-inositol + ATP = 1,2-di(9Z,12Z)-octadecadienoyl-sn-glycero-3-phospho-1D-myo-inositol 5-phosphate + ADP + H(+). In terms of biological role, catalyzes the phosphorylation of phosphatidylinositol 4-phosphate (PtdIns(4)P/PI4P) to form phosphatidylinositol 4,5-bisphosphate (PtdIns(4,5)P2/PIP2), a lipid second messenger that regulates several cellular processes such as signal transduction, vesicle trafficking, actin cytoskeleton dynamics, cell adhesion, and cell motility. PtdIns(4,5)P2 can directly act as a second messenger or can be utilized as a precursor to generate other second messengers: inositol 1,4,5-trisphosphate (IP3), diacylglycerol (DAG) or phosphatidylinositol-3,4,5-trisphosphate (PtdIns(3,4,5)P3/PIP3). PIP5K1A-mediated phosphorylation of PtdIns(4)P is the predominant pathway for PtdIns(4,5)P2 synthesis. Together with PIP5K1A, is required for phagocytosis, both enzymes regulating different types of actin remodeling at sequential steps. Promotes particle attachment by generating the pool of PtdIns(4,5)P2 that induces controlled actin depolymerization to facilitate Fc-gamma-R clustering. Mediates RAC1-dependent reorganization of actin filaments. Required for synaptic vesicle transport. Controls the plasma membrane pool of PtdIns(4,5)P2 implicated in synaptic vesicle endocytosis and exocytosis. Plays a role in endocytosis mediated by clathrin and AP-2 (adaptor protein complex 2). Required for clathrin-coated pits assembly at the synapse. Participates in cell junction assembly. Modulates adherens junctions formation by facilitating CDH1/cadherin trafficking. Required for focal adhesion dynamics. Modulates the targeting of talins (TLN1 and TLN2) to the plasma membrane and their efficient assembly into focal adhesions. Regulates the interaction between talins (TLN1 and TLN2) and beta-integrins. Required for uropodium formation and retraction of the cell rear during directed migration. Has a role in growth factor-stimulated directional cell migration and adhesion. Required for talin assembly into nascent adhesions forming at the leading edge toward the direction of the growth factor. Negative regulator of T-cell activation and adhesion. Negatively regulates integrin alpha-L/beta-2 (LFA-1) polarization and adhesion induced by T-cell receptor. Together with PIP5K1A has a role during embryogenesis and together with PIP5K1B may have a role immediately after birth. The chain is Phosphatidylinositol 4-phosphate 5-kinase type-1 gamma from Homo sapiens (Human).